Consider the following 787-residue polypeptide: LPS-assembly protein LptD (787 aa).

Positions 1 to 78 are disordered; that stretch reads MAAGLPPLVV…AAGAAPAESG (78 aa). A compositionally biased stretch (low complexity) spans 59–78; it reads LPPVGTPAEPAAGAAPAESG.

This sequence belongs to the LptD family. Component of the lipopolysaccharide transport and assembly complex. Interacts with LptE and LptA.

In terms of biological role, together with LptE, is involved in the assembly of lipopolysaccharide (LPS) at the surface of the outer membrane. In Aromatoleum aromaticum (strain DSM 19018 / LMG 30748 / EbN1) (Azoarcus sp. (strain EbN1)), this protein is LPS-assembly protein LptD.